A 97-amino-acid polypeptide reads, in one-letter code: uncharacterized protein (97 aa).

This is an uncharacterized protein from Mycobacterium tuberculosis (strain CDC 1551 / Oshkosh).